Here is an 810-residue protein sequence, read N- to C-terminus: Cation/H(+) antiporter 18 (810 aa).

The next 12 helical transmembrane spans lie at 29–49, 59–76, 91–111, 126–146, 157–177, 193–213, 223–243, 277–297, 314–334, 343–363, 374–394, and 406–426; these read FALPLAILQIVIVIVLTRVLA, RVIAEVIGGIMLGPSLLG, LTVLETLANLGLLFFLFLAGL, LGIALAGITLPFALGIGSSFV, STAFLVFMGVALSITAFPVLA, LAMSAAAVNDVAAWILLALAI, LVSLWVFLSGCAFVIGASFII, FITDAIGIHSMFGAFVVGVLI, LVSGLFLPLYFVASGLKTNVA, GLLVLVTATACFGKILGTLGV, AITLGFLMNTKGLVELIVLNI, and FAIMVLMALFTTFITTPVVMA. A Phosphoserine modification is found at serine 804.

The protein belongs to the monovalent cation:proton antiporter 2 (CPA2) transporter (TC 2.A.37) family. CHX (TC 2.A.37.4) subfamily. As to expression, expressed in roots.

It is found in the membrane. Functionally, may operate as a cation/H(+) antiporter. This Arabidopsis thaliana (Mouse-ear cress) protein is Cation/H(+) antiporter 18 (CHX18).